A 601-amino-acid polypeptide reads, in one-letter code: Putative helicase 7 (601 aa).

A Helicase ATP-binding domain is found at 17–182 (QSFLMSDKNL…IIDAEIIKTD (166 aa)). 30–37 (APTGTGKS) is an ATP binding site. The short motif at 129 to 132 (DEIH) is the DEAH box element. The Helicase C-terminal domain occupies 208 to 375 (LKEDFIKKMV…VLEDFLLALI (168 aa)).

The polypeptide is Putative helicase 7 (SIFV0007) (Saccharolobus islandicus (Sulfolobus islandicus)).